A 60-amino-acid chain; its full sequence is uncharacterized protein (60 aa).

This is an uncharacterized protein from Enterobacteria phage T4 (Bacteriophage T4).